Reading from the N-terminus, the 134-residue chain is Large ribosomal subunit protein uL16c (134 aa).

Belongs to the universal ribosomal protein uL16 family. As to quaternary structure, part of the 50S ribosomal subunit.

The protein resides in the plastid. It is found in the chloroplast. In Solanum lycopersicum (Tomato), this protein is Large ribosomal subunit protein uL16c.